A 294-amino-acid polypeptide reads, in one-letter code: Large ribosomal subunit protein uL4m (294 aa).

Residues 119–139 (EVSGGGRKPWQQKGSGRARHG) are disordered. Arg-147 is modified (omega-N-methylarginine).

This sequence belongs to the universal ribosomal protein uL4 family. As to quaternary structure, component of the mitochondrial ribosome large subunit (39S) which comprises a 16S rRNA and about 50 distinct proteins. Interacts with MIEF1 upstream open reading frame protein.

It is found in the mitochondrion. The chain is Large ribosomal subunit protein uL4m (Mrpl4) from Mus musculus (Mouse).